Here is a 213-residue protein sequence, read N- to C-terminus: Small ribosomal subunit protein uS7 (213 aa).

This sequence belongs to the universal ribosomal protein uS7 family. As to quaternary structure, component of the small ribosomal subunit (SSU). Mature N.crassa ribosomes consist of a small (40S) and a large (60S) subunit. The 40S small subunit contains 1 molecule of ribosomal RNA (18S rRNA) and at least 32 different proteins. The large 60S subunit contains 3 rRNA molecules (26S, 5.8S and 5S rRNA) and at least 42 different proteins.

Its subcellular location is the cytoplasm. Functionally, component of the ribosome, a large ribonucleoprotein complex responsible for the synthesis of proteins in the cell. The small ribosomal subunit (SSU) binds messenger RNAs (mRNAs) and translates the encoded message by selecting cognate aminoacyl-transfer RNA (tRNA) molecules. The large subunit (LSU) contains the ribosomal catalytic site termed the peptidyl transferase center (PTC), which catalyzes the formation of peptide bonds, thereby polymerizing the amino acids delivered by tRNAs into a polypeptide chain. The nascent polypeptides leave the ribosome through a tunnel in the LSU and interact with protein factors that function in enzymatic processing, targeting, and the membrane insertion of nascent chains at the exit of the ribosomal tunnel. The polypeptide is Small ribosomal subunit protein uS7 (rps-5) (Neurospora crassa (strain ATCC 24698 / 74-OR23-1A / CBS 708.71 / DSM 1257 / FGSC 987)).